Reading from the N-terminus, the 173-residue chain is RNA pyrophosphohydrolase (173 aa).

The Nudix hydrolase domain maps to 6–149; the sequence is GFRANVGIIL…KRGVYRRALR (144 aa). The short motif at 38–59 is the Nudix box element; it reads GGIDEGETPLDAMYRELWEEVG.

It belongs to the Nudix hydrolase family. RppH subfamily. It depends on a divalent metal cation as a cofactor.

Functionally, accelerates the degradation of transcripts by removing pyrophosphate from the 5'-end of triphosphorylated RNA, leading to a more labile monophosphorylated state that can stimulate subsequent ribonuclease cleavage. This Psychrobacter sp. (strain PRwf-1) protein is RNA pyrophosphohydrolase.